Reading from the N-terminus, the 432-residue chain is Adenylosuccinate synthetase (432 aa).

GTP-binding positions include 12-18 (GDEGKGK) and 40-42 (GHT). The active-site Proton acceptor is the Asp13. Mg(2+)-binding residues include Asp13 and Gly40. IMP is bound by residues 13-16 (DEGK), 38-41 (NAGH), Thr130, Arg144, Gln225, Thr240, and Arg304. The active-site Proton donor is the His41. Substrate is bound at residue 300–306 (ATTGRPR). GTP is bound by residues Arg306, 332-334 (KLD), and 414-416 (SVG).

Belongs to the adenylosuccinate synthetase family. In terms of assembly, homodimer. It depends on Mg(2+) as a cofactor.

The protein localises to the cytoplasm. The enzyme catalyses IMP + L-aspartate + GTP = N(6)-(1,2-dicarboxyethyl)-AMP + GDP + phosphate + 2 H(+). It functions in the pathway purine metabolism; AMP biosynthesis via de novo pathway; AMP from IMP: step 1/2. In terms of biological role, plays an important role in the de novo pathway of purine nucleotide biosynthesis. Catalyzes the first committed step in the biosynthesis of AMP from IMP. The chain is Adenylosuccinate synthetase from Anaeromyxobacter sp. (strain K).